Consider the following 524-residue polypeptide: Cytochrome P450 monooxygenase ankB (524 aa).

Residues 22–42 traverse the membrane as a helical segment; sequence FHALSIQAPGLLLGTLLFYLF. Cys466 serves as a coordination point for heme.

Belongs to the cytochrome P450 family. The cofactor is heme.

The protein resides in the membrane. It carries out the reaction cyclo(L-arginyl-tyrosyl) + reduced [NADPH--hemoprotein reductase] + O2 = cyclo(L-arginyl-L-dehydrotyrosyl) + oxidized [NADPH--hemoprotein reductase] + 2 H2O + H(+). The protein operates within alkaloid biosynthesis. Its function is as follows. Cytochrome P450 monooxygenase; part of the ank cluster that mediates the biosynthesis of NK13650 C, a highly modified cyclo-arginine-tyrosine dipeptide. AnkB is responsible for desaturation of the ankA product cyclo-Arg-Tyr diketopiperazine, likely through hydroxylation of the benzylic position followed by dehydration to yield a dehydro-cyclodipeptide. Within the pathway, the cyclodipeptide synthase ankA acts as the scaffold-generating enzyme and is responsible for formation of the cyclo-Arg-Tyr diketopiperazine (cRY) from L-Arg and L-Tyr. The ankA product cRY is desaturated by the cytochrome P450 monooxygenase ankB to yield a dehydro-cyclodipeptide intermediate. The FAD-dependent monooxygenase ankC then installs the m-OH, ankD catalyzes the attachment of L-homoserine, and ankE ligates citrate to the ankD product to yield NK13650 B. The O-methyltransferase ankF is responsible for methylation of the C-17 phenol group of NK13650 B to produce NK13650 D. Amidation of NK13650 D with L-Asp by ankG then leads to the production of NK13650 C, whereas amidation of NK13650 B produces NK13650 A. This Aspergillus thermomutatus (Neosartorya pseudofischeri) protein is Cytochrome P450 monooxygenase ankB.